A 450-amino-acid polypeptide reads, in one-letter code: Phosphoglucosamine mutase (450 aa).

Ser-97 functions as the Phosphoserine intermediate in the catalytic mechanism. 4 residues coordinate Mg(2+): Ser-97, Asp-236, Asp-238, and Asp-240. Ser-97 bears the Phosphoserine mark.

Belongs to the phosphohexose mutase family. Requires Mg(2+) as cofactor. Post-translationally, activated by phosphorylation.

The catalysed reaction is alpha-D-glucosamine 1-phosphate = D-glucosamine 6-phosphate. Catalyzes the conversion of glucosamine-6-phosphate to glucosamine-1-phosphate. In Prochlorococcus marinus (strain AS9601), this protein is Phosphoglucosamine mutase.